Reading from the N-terminus, the 505-residue chain is Maturase K (505 aa).

The protein belongs to the intron maturase 2 family. MatK subfamily.

It localises to the plastid. It is found in the chloroplast. Functionally, usually encoded in the trnK tRNA gene intron. Probably assists in splicing its own and other chloroplast group II introns. The protein is Maturase K of Illicium oligandrum (Star anise).